The primary structure comprises 892 residues: MSQQTTIRKLAELVNTPVEKLLEQLAGAGMKFSGPDQVVTSTEKMKLLGFLRRTHGKSDVSVGAVREAPKKITLNRRRLQEVTVNAGRNKTTVNVEVRQKRTYVKTPESEYHTPTKPPIELGDAERVEILRKLEESRQRNLAEQQRLAEVDRQRVEEQERKRLEEEQAELERQKTESPVVEEVPVQSDSNSVKPVSKPISEDRTRALPRAVRPAPAARPSVSRSDDRNSNSGVRHKPRGSHVIVSDEDDSARRFAGQMHLTAAERARRGSNTRGKGGGSHRGATHRGNENSIRSSGAHGFERPTAAVVREVAVGDTITVADLAQKLALKSGDMVKALFKMGVMVTITQTIDHDTAVLVSEELGHKVTRASSSDFEDALLAHTEEVHGEPVPRPPVVTIMGHVDHGKTSLLDYIRRTKIAVGEAGGITQHIGAYHVETPRGVISFLDTPGHAAFTSMRARGAKITDIVVLVVAADDGVMPQTKEAVQHARAAGVPLIVAVSKIDKSTADPQRVKNELLTESVVAEEFGGDTQFVELSAKTGVGVDALLDAISIQAEVLELKAVIEGRATGTVIESSLDKGRGPVATVLVQQGRLKKGDYLVCGTHYGRVRALFDEVGHQPLAASPSIPVQVLGLSGVPDAGDDFVVVDDERLAKDVAQQREAKRRESRLVTSAGNRMEDILAQMGKGENQQVLNLLIKADVQGSLEALKQALVALSNDDIRINVIHVGVGGITESDANSAVTSKATVIGFNVRADASARKIIEANGVDLRYFSIIYDVIDQVKQVASGLLGVEIREEIIGVAEVRDVFRSSKFGAVAGCMIIEGVVKRSKPIRVLRDNTVVFEGELESLRRFKENVDEVRNSTECGIGVKAYNDVRVGDHIECFERIEVARTL.

Basic and acidic residues predominate over residues 165–175 (EEQAELERQKT). Disordered stretches follow at residues 165–250 (EEQA…EDDS) and 264–300 (ERAR…AHGF). Residues 208–222 (PRAVRPAPAARPSVS) show a composition bias toward low complexity. In terms of domain architecture, tr-type G spans 391–560 (PRPPVVTIMG…SIQAEVLELK (170 aa)). Residues 400-407 (GHVDHGKT), 446-450 (DTPGH), and 500-503 (SKID) contribute to the GTP site.

Belongs to the TRAFAC class translation factor GTPase superfamily. Classic translation factor GTPase family. IF-2 subfamily.

The protein resides in the cytoplasm. In terms of biological role, one of the essential components for the initiation of protein synthesis. Protects formylmethionyl-tRNA from spontaneous hydrolysis and promotes its binding to the 30S ribosomal subunits. Also involved in the hydrolysis of GTP during the formation of the 70S ribosomal complex. The chain is Translation initiation factor IF-2 from Xylella fastidiosa (strain 9a5c).